We begin with the raw amino-acid sequence, 166 residues long: Phosphopantetheine adenylyltransferase (166 aa).

Ser-11 serves as a coordination point for substrate. ATP contacts are provided by residues 11 to 12 (SF) and His-19. Lys-43, Ala-76, and Arg-90 together coordinate substrate. ATP-binding positions include 91–93 (GLR), Glu-101, and 126–132 (YRYFSSS).

Belongs to the bacterial CoaD family. Homohexamer. Mg(2+) serves as cofactor.

The protein resides in the cytoplasm. The enzyme catalyses (R)-4'-phosphopantetheine + ATP + H(+) = 3'-dephospho-CoA + diphosphate. It participates in cofactor biosynthesis; coenzyme A biosynthesis; CoA from (R)-pantothenate: step 4/5. Its function is as follows. Reversibly transfers an adenylyl group from ATP to 4'-phosphopantetheine, yielding dephospho-CoA (dPCoA) and pyrophosphate. The polypeptide is Phosphopantetheine adenylyltransferase (Streptococcus mutans serotype c (strain ATCC 700610 / UA159)).